Consider the following 640-residue polypeptide: Threonine--tRNA ligase (640 aa).

Positions 1–61 (MPIITLPNGD…TEDSTLQIIT (61 aa)) constitute a TGS domain. The segment at 242–533 (DHRKIGKALD…LIEHYAGFMP (292 aa)) is catalytic. 3 residues coordinate Zn(2+): Cys-333, His-384, and His-510.

The protein belongs to the class-II aminoacyl-tRNA synthetase family. In terms of assembly, homodimer. Zn(2+) is required as a cofactor.

Its subcellular location is the cytoplasm. The enzyme catalyses tRNA(Thr) + L-threonine + ATP = L-threonyl-tRNA(Thr) + AMP + diphosphate + H(+). In terms of biological role, catalyzes the attachment of threonine to tRNA(Thr) in a two-step reaction: L-threonine is first activated by ATP to form Thr-AMP and then transferred to the acceptor end of tRNA(Thr). Also edits incorrectly charged L-seryl-tRNA(Thr). This chain is Threonine--tRNA ligase, found in Acinetobacter baumannii (strain AB0057).